The chain runs to 469 residues: Argininosuccinate lyase (469 aa).

It belongs to the lyase 1 family. Argininosuccinate lyase subfamily.

Its subcellular location is the cytoplasm. It carries out the reaction 2-(N(omega)-L-arginino)succinate = fumarate + L-arginine. It functions in the pathway amino-acid biosynthesis; L-arginine biosynthesis; L-arginine from L-ornithine and carbamoyl phosphate: step 3/3. In Burkholderia cenocepacia (strain HI2424), this protein is Argininosuccinate lyase.